The chain runs to 207 residues: Cytochrome c biogenesis ATP-binding export protein CcmA 1 (207 aa).

The ABC transporter domain occupies 6–207 (LEALDLAGVR…KTSQTVRMGA (202 aa)). 38-45 (GENGSGKT) serves as a coordination point for ATP.

The protein belongs to the ABC transporter superfamily. CcmA exporter (TC 3.A.1.107) family. As to quaternary structure, the complex is composed of two ATP-binding proteins (CcmA) and two transmembrane proteins (CcmB).

The protein resides in the cell inner membrane. It carries out the reaction heme b(in) + ATP + H2O = heme b(out) + ADP + phosphate + H(+). Functionally, part of the ABC transporter complex CcmAB involved in the biogenesis of c-type cytochromes; once thought to export heme, this seems not to be the case, but its exact role is uncertain. Responsible for energy coupling to the transport system. The sequence is that of Cytochrome c biogenesis ATP-binding export protein CcmA 1 from Cupriavidus metallidurans (strain ATCC 43123 / DSM 2839 / NBRC 102507 / CH34) (Ralstonia metallidurans).